Consider the following 1133-residue polypeptide: RNA-dependent RNA polymerase 2 (1133 aa).

Asp-830, Asp-832, and Asp-834 together coordinate Mg(2+).

This sequence belongs to the RdRP family. Interacts with NRPD1 and SHH1. Associates with Pol IV complex, forming an interpolymerase channel bridging their active sites, through which the Pol IV-generated transcript is handed over to the RDR2 active site after being backtracked, where it is used as the template for double-stranded RNA (dsRNA) synthesis. Interacts with JMJ24.

The protein resides in the nucleus. It localises to the nucleoplasm. The protein localises to the nucleolus. The enzyme catalyses RNA(n) + a ribonucleoside 5'-triphosphate = RNA(n+1) + diphosphate. Functionally, RNA-dependent direct polymerase involved in the production of small interfering RNAs (siRNAs). Binds to single-stranded RNA (ssRNA); engages ssRNAs longer than 7 nucleotides and initiates internal to their 3' ends. Able to transcribe the RNA of an RNA/DNA hybrid, the transcript produced by Pol IV, if its 3' end is accessible, to generate double-stranded small interfering RNAs (dsRNAs) precursor essential for establishing and maintaining DNA methylation. Required for the biogenesis of endogenous siRNAs of 24 nucleotide which derive from heterochromatin and DNA repeats such as transposons or endogenous gene tandem repeats, such as repeats present in FWA gene. Involved in transcriptional gene silencing (TGS). Component of the RNA-directed DNA methylation (RdDM) silencing pathway that utilizes siRNAs to guide DNA methyltransferases to asymmetric cytosines. Involved in control of flowering time through RdDM of FWA locus. Required for reception of long-distance mRNA silencing in the shoot. Required for the formation of telomeric siRNAs and the RNA-dependent DNA methylation of asymmetric cytosines in telomeric (5'-CCCTAAA-3') repeats. In Arabidopsis thaliana (Mouse-ear cress), this protein is RNA-dependent RNA polymerase 2.